A 295-amino-acid chain; its full sequence is Succinate dehydrogenase [ubiquinone] iron-sulfur subunit, mitochondrial (295 aa).

The region spanning 67-144 (EKPRLQSYTL…DTKIYPLPHM (78 aa)) is the 2Fe-2S ferredoxin-type domain. Cys-106, Cys-111, Cys-114, and Cys-126 together coordinate [2Fe-2S] cluster. The 31-residue stretch at 185–215 (ERRRLDGLYECILCACCSTSCPSYWWNQDEY) folds into the 4Fe-4S ferredoxin-type domain. 3 residues coordinate [4Fe-4S] cluster: Cys-195, Cys-198, and Cys-201. A [3Fe-4S] cluster-binding site is contributed by Cys-205. Trp-210 provides a ligand contact to a ubiquinone. [3Fe-4S] cluster contacts are provided by Cys-252 and Cys-258. Cys-262 is a [4Fe-4S] cluster binding site.

It belongs to the succinate dehydrogenase/fumarate reductase iron-sulfur protein family. As to quaternary structure, component of complex II composed of four subunits: a flavoprotein (FP), an iron-sulfur protein (IP), and a cytochrome b composed of a large and a small subunit. It depends on [2Fe-2S] cluster as a cofactor. [3Fe-4S] cluster is required as a cofactor. Requires [4Fe-4S] cluster as cofactor.

It localises to the mitochondrion inner membrane. It catalyses the reaction a quinone + succinate = fumarate + a quinol. The protein operates within carbohydrate metabolism; tricarboxylic acid cycle; fumarate from succinate (eukaryal route): step 1/1. Functionally, iron-sulfur protein (IP) subunit of succinate dehydrogenase (SDH) that is involved in complex II of the mitochondrial electron transport chain and is responsible for transferring electrons from succinate to ubiquinone (coenzyme Q). This chain is Succinate dehydrogenase [ubiquinone] iron-sulfur subunit, mitochondrial (SDH2), found in Mycosarcoma maydis (Corn smut fungus).